We begin with the raw amino-acid sequence, 522 residues long: Cytochrome bd-I ubiquinol oxidase subunit 1 (522 aa).

Met1 carries the post-translational modification N-formylmethionine. Topologically, residues 1 to 22 are cytoplasmic; the sequence is MLDIVELSRLQFALTAMYHFLF. Residue His19 participates in heme b binding. The chain crosses the membrane as a helical span at residues 23-42; it reads VPLTLGMAFLLAIMETVYVL. At 43 to 94 the chain is on the periplasmic side; it reads SGKQIYKDMTKFWGKLFGINFALGVATGLTMEFQFGTNWSYYSHYVGDIFGA. Residues 95–114 form a helical membrane-spanning segment; it reads PLAIEGLMAFFLESTFVGLF. At 115–129 the chain is on the cytoplasmic side; sequence FFGWDRLGKVQHMCV. A helical membrane pass occupies residues 130-149; it reads TWLVALGSNLSALWILVANG. At 150–187 the chain is on the periplasmic side; the sequence is WMQNPIASDFNFETMRMEMVSFSELVLNPVAQVKFVHT. Heme b is bound at residue His186. A helical membrane pass occupies residues 188–207; the sequence is VASGYVTGAMFILGISAWYM. Over 208–219 the chain is Cytoplasmic; the sequence is LKGRDFAFAKRS. A helical membrane pass occupies residues 220–239; that stretch reads FAIAASFGMAAVLSVIVLGD. The Periplasmic segment spans residues 240–392; that stretch reads ESGYEMGDVQ…VAPLYFAFRI (153 aa). Met393 lines the heme b pocket. Residues 393–412 traverse the membrane as a helical segment; that stretch reads MVACGFLLLAIIALSFWSVI. Over 413–470 the chain is Cytoplasmic; that stretch reads RNRIGEKKWLLRAALYGIPLPWIAVEAGWFVAEYGRQPWAIGEVLPTAVANSSLTAGD. The chain crosses the membrane as a helical span at residues 471–490; it reads LIFSMVLICGLYTLFLVAEL. Over 491–522 the chain is Periplasmic; that stretch reads FLMFKFARLGPSSLKTGRYHFEQSSTTTQPAR.

The protein belongs to the cytochrome ubiquinol oxidase subunit 1 family. Heterodimer of subunits I and II. Requires heme b as cofactor. Heme d cis-diol is required as a cofactor.

It localises to the cell inner membrane. It carries out the reaction 2 a ubiquinol + O2(in) + 4 H(+)(in) = 2 a ubiquinone + 2 H2O(in) + 4 H(+)(out). The protein operates within energy metabolism; oxidative phosphorylation. A terminal oxidase that produces a proton motive force by the vectorial transfer of protons across the inner membrane. It is the component of the aerobic respiratory chain of E.coli that predominates when cells are grown at low aeration. Generates a proton motive force using protons and electrons from opposite sides of the membrane to generate H(2)O, transferring 1 proton/electron. The sequence is that of Cytochrome bd-I ubiquinol oxidase subunit 1 (cydA) from Escherichia coli O6:H1 (strain CFT073 / ATCC 700928 / UPEC).